The chain runs to 232 residues: Fibrillarin-like rRNA/tRNA 2'-O-methyltransferase (232 aa).

Residues 89 to 90 (TT), 108 to 109 (EF), 133 to 134 (DA), and 153 to 156 (DIAQ) contribute to the S-adenosyl-L-methionine site.

The protein belongs to the methyltransferase superfamily. Fibrillarin family. Interacts with nop5. Component of box C/D small ribonucleoprotein (sRNP) particles that contain rpl7ae, FlpA and nop5, plus a guide RNA.

In terms of biological role, involved in pre-rRNA and tRNA processing. Utilizes the methyl donor S-adenosyl-L-methionine to catalyze the site-specific 2'-hydroxyl methylation of ribose moieties in rRNA and tRNA. Site specificity is provided by a guide RNA that base pairs with the substrate. Methylation occurs at a characteristic distance from the sequence involved in base pairing with the guide RNA. This Saccharolobus islandicus (strain M.16.27) (Sulfolobus islandicus) protein is Fibrillarin-like rRNA/tRNA 2'-O-methyltransferase.